The following is a 344-amino-acid chain: Dihydroorotate dehydrogenase (quinone) (344 aa).

FMN-binding positions include 65 to 69 and T89; that span reads AGLDK. Residue K69 coordinates substrate. 114-118 contributes to the substrate binding site; that stretch reads NRMGF. FMN is bound by residues N145 and N178. N178 is a substrate binding site. S181 serves as the catalytic Nucleophile. Residue N183 coordinates substrate. FMN contacts are provided by K223 and T251. 252-253 is a substrate binding site; sequence NT. FMN contacts are provided by residues G274, G303, and 324 to 325; that span reads YT.

The protein belongs to the dihydroorotate dehydrogenase family. Type 2 subfamily. In terms of assembly, monomer. The cofactor is FMN.

The protein resides in the cell membrane. It catalyses the reaction (S)-dihydroorotate + a quinone = orotate + a quinol. Its pathway is pyrimidine metabolism; UMP biosynthesis via de novo pathway; orotate from (S)-dihydroorotate (quinone route): step 1/1. Catalyzes the conversion of dihydroorotate to orotate with quinone as electron acceptor. The chain is Dihydroorotate dehydrogenase (quinone) from Ralstonia nicotianae (strain ATCC BAA-1114 / GMI1000) (Ralstonia solanacearum).